The primary structure comprises 196 residues: Peptidyl-tRNA hydrolase (196 aa).

Y16 contacts tRNA. The active-site Proton acceptor is the H21. Residues F67, N69, and N115 each contribute to the tRNA site.

The protein belongs to the PTH family. Monomer.

Its subcellular location is the cytoplasm. It carries out the reaction an N-acyl-L-alpha-aminoacyl-tRNA + H2O = an N-acyl-L-amino acid + a tRNA + H(+). In terms of biological role, hydrolyzes ribosome-free peptidyl-tRNAs (with 1 or more amino acids incorporated), which drop off the ribosome during protein synthesis, or as a result of ribosome stalling. Functionally, catalyzes the release of premature peptidyl moieties from peptidyl-tRNA molecules trapped in stalled 50S ribosomal subunits, and thus maintains levels of free tRNAs and 50S ribosomes. This chain is Peptidyl-tRNA hydrolase, found in Edwardsiella ictaluri (strain 93-146).